The primary structure comprises 185 residues: Putative manganese efflux pump MntP (185 aa).

The next 6 helical transmembrane spans lie at Ile-3–Ala-23, Leu-40–Ile-60, Phe-64–Ile-84, Thr-102–Ile-122, Leu-124–Ile-144, and Glu-165–Met-185.

This sequence belongs to the MntP (TC 9.B.29) family.

It localises to the cell inner membrane. Functionally, probably functions as a manganese efflux pump. This chain is Putative manganese efflux pump MntP, found in Elusimicrobium minutum (strain Pei191).